Reading from the N-terminus, the 402-residue chain is MKIQTEVDELGFFGEYGGQYVPETLMPAIIELKKAYEDAKSDTHFKKEFNYYLSEYVGRETPLTFAESYTKLLGGAKIYLKREDLNHTGAHKINNAIGQALLAKRMGKTKLVAETGAGQHGVASATIAALFDMDLIVFMGSEDIKRQQLNVFRMELLGAKVVSVSDGQGTLSDAVNKALQYWVNHVEDTHYLLGSALGPDPFPTMVRDFQSVIGNEIKSQILSKEGRLPDALVACVGGGSNSIGTFYPFIQDDVKLYGVEAAGKGSHTHNHALAIGKGKPGVLHGSKMYLIQNDDGQIELAHSISAGLDYPGIGPEHSYYNDIGRVSYVSATDNEAMEALITFSKVEGIIPAIESAHALSYVEKLAPNMDEKEIIVVTISGRGDKDMETIKQYKENGGEQNE.

Lys92 is modified (N6-(pyridoxal phosphate)lysine).

The protein belongs to the TrpB family. In terms of assembly, tetramer of two alpha and two beta chains. Pyridoxal 5'-phosphate serves as cofactor.

The enzyme catalyses (1S,2R)-1-C-(indol-3-yl)glycerol 3-phosphate + L-serine = D-glyceraldehyde 3-phosphate + L-tryptophan + H2O. It functions in the pathway amino-acid biosynthesis; L-tryptophan biosynthesis; L-tryptophan from chorismate: step 5/5. In terms of biological role, the beta subunit is responsible for the synthesis of L-tryptophan from indole and L-serine. This Staphylococcus epidermidis (strain ATCC 35984 / DSM 28319 / BCRC 17069 / CCUG 31568 / BM 3577 / RP62A) protein is Tryptophan synthase beta chain.